The chain runs to 195 residues: Thymidine kinase (195 aa).

ATP-binding positions include 15–22 (GSMFSGKS) and 88–91 (DEVQ). E89 acts as the Proton acceptor in catalysis. Residue F120 participates in substrate binding. Residues C145 and C148 each contribute to the Zn(2+) site. Substrate contacts are provided by residues 170 to 174 (IILVG) and Y179. Zn(2+) contacts are provided by C183 and C186.

Belongs to the thymidine kinase family. Homotetramer.

It is found in the cytoplasm. It carries out the reaction thymidine + ATP = dTMP + ADP + H(+). In Bacillus cereus (strain ATCC 14579 / DSM 31 / CCUG 7414 / JCM 2152 / NBRC 15305 / NCIMB 9373 / NCTC 2599 / NRRL B-3711), this protein is Thymidine kinase.